The sequence spans 876 residues: Alanine--tRNA ligase (876 aa).

Zn(2+) is bound by residues histidine 564, histidine 568, cysteine 666, and histidine 670.

The protein belongs to the class-II aminoacyl-tRNA synthetase family. In terms of assembly, homotetramer. Zn(2+) serves as cofactor.

It localises to the cytoplasm. The catalysed reaction is tRNA(Ala) + L-alanine + ATP = L-alanyl-tRNA(Ala) + AMP + diphosphate. Functionally, catalyzes the attachment of alanine to tRNA(Ala) in a two-step reaction: alanine is first activated by ATP to form Ala-AMP and then transferred to the acceptor end of tRNA(Ala). Also edits incorrectly charged Ser-tRNA(Ala) and Gly-tRNA(Ala) via its editing domain. This is Alanine--tRNA ligase from Salmonella paratyphi A (strain ATCC 9150 / SARB42).